Reading from the N-terminus, the 570-residue chain is Formate--tetrahydrofolate ligase (570 aa).

Residue 65 to 72 (TPHGEGKT) coordinates ATP.

The protein belongs to the formate--tetrahydrofolate ligase family.

The enzyme catalyses (6S)-5,6,7,8-tetrahydrofolate + formate + ATP = (6R)-10-formyltetrahydrofolate + ADP + phosphate. It functions in the pathway one-carbon metabolism; tetrahydrofolate interconversion. The polypeptide is Formate--tetrahydrofolate ligase (Shewanella sp. (strain ANA-3)).